A 128-amino-acid polypeptide reads, in one-letter code: Small ribosomal subunit protein uS9 (128 aa).

Residues 106-128 are disordered; sequence PRVVERKKPGRPKARKRFQFSKR. A compositionally biased stretch (basic residues) spans 113-128; the sequence is KPGRPKARKRFQFSKR.

Belongs to the universal ribosomal protein uS9 family.

This Porphyromonas gingivalis (strain ATCC 33277 / DSM 20709 / CIP 103683 / JCM 12257 / NCTC 11834 / 2561) protein is Small ribosomal subunit protein uS9.